The following is a 127-amino-acid chain: Small ribosomal subunit protein eS8 (127 aa).

Residues 1-24 (MKWQGKSARKPTGGRLVPARGKRK) are disordered.

Belongs to the eukaryotic ribosomal protein eS8 family. Part of the 30S ribosomal subunit.

This Methanothrix thermoacetophila (strain DSM 6194 / JCM 14653 / NBRC 101360 / PT) (Methanosaeta thermophila) protein is Small ribosomal subunit protein eS8.